The chain runs to 851 residues: M-phase phosphoprotein 8 (851 aa).

The tract at residues 21–54 is disordered; the sequence is NIGRSPEVEGGGAAGEEKDAATKGTVAVGDSEED. Serine 51, serine 85, and serine 136 each carry phosphoserine. One can recognise a Chromo domain in the interval 59–118; that stretch reads FEVERILDMKCEGGKNLYKVRWKGYTSDDDTWEPEVHLEDCKEVLLEFRKKVAENKAKAV. A histone H3K9me3 binding region spans residues 80 to 87; sequence WKGYTSDD. Residues 133–174 are disordered; sequence EADSDIDQQGDTKEDTSPRKKKKKIKYKEDKSPDDLRKKRAK. Threonine 144 is modified (phosphothreonine). Residues serine 149 and serine 164 each carry the phosphoserine; by CDK1 modification. A compositionally biased stretch (basic and acidic residues) spans 159 to 169; sequence YKEDKSPDDLR. Phosphoserine occurs at positions 188, 263, 267, and 274. The tract at residues 240 to 302 is disordered; that stretch reads REDVKDNRKT…KTGQDTVQES (63 aa). Residues 269 to 278 show a composition bias toward acidic residues; sequence TLEDESEDFL. Residues 279–295 are compositionally biased toward basic and acidic residues; sequence SDNKEKQNVRTAKDKTG. At serine 313 the chain carries Phosphoserine. The disordered stretch occupies residues 315-428; that stretch reads EEAGTRVRRK…DKEEKARKEP (114 aa). The span at 329–364 shows a compositional bias: basic and acidic residues; it reads RKFEEPKEIKKLENTNNFLERKMIPKKQRNQDKGRS. A Phosphothreonine; by CDK1 modification is found at threonine 379. A phosphoserine mark is found at serine 386 and serine 394. Basic and acidic residues predominate over residues 401-428; sequence EKERKNEPKEKYQKRYDFDKEEKARKEP. Threonine 447 is modified (phosphothreonine). ANK repeat units lie at residues 591–620, 624–653, 657–686, and 690–719; these read TGMT…KVNG, NGTT…FVNV, NGET…DCNI, and HQNS…TLSR.

Homodimer. Interacts (via chromo domain) with histone H3K9me3. Has the highest affinity for H3K9me3, and lesser affinity for H3K9me2 and H3K9me1. Component of the HUSH complex; at least composed of TASOR, PPHLN1 and MPHOSPH8. Interacts with DNMT3, EHMT1 and SETDB1. Interacts with MORC2; the interaction associateS MORC2 with the HUSH complex which recruits MORC2 to heterochromatic loci. Interacts with ZNF638; leading to recruitment of the HUSH complex to unintegrated retroviral DNA. Interacts with TASOR. Post-translationally, phosphorylated in M (mitotic) phase. Phosphorylation by CDK1 promotes dissociation from chromatin.

The protein localises to the nucleus. Its subcellular location is the chromosome. In terms of biological role, heterochromatin component that specifically recognizes and binds methylated 'Lys-9' of histone H3 (H3K9me) and promotes recruitment of proteins that mediate epigenetic repression. Mediates recruitment of the HUSH complex to H3K9me3 sites: the HUSH complex is recruited to genomic loci rich in H3K9me3 and is required to maintain transcriptional silencing by promoting recruitment of SETDB1, a histone methyltransferase that mediates further deposition of H3K9me3, as well as MORC2. Binds H3K9me and promotes DNA methylation by recruiting DNMT3A to target CpG sites; these can be situated within the coding region of the gene. Mediates down-regulation of CDH1 expression. Also represses L1 retrotransposons in collaboration with MORC2 and, probably, SETDB1, the silencing is dependent of repressive epigenetic modifications, such as H3K9me3 mark. Silencing events often occur within introns of transcriptionally active genes, and lead to the down-regulation of host gene expression. The HUSH complex is also involved in the silencing of unintegrated retroviral DNA by being recruited by ZNF638: some part of the retroviral DNA formed immediately after infection remains unintegrated in the host genome and is transcriptionally repressed. The chain is M-phase phosphoprotein 8 from Rattus norvegicus (Rat).